Here is a 237-residue protein sequence, read N- to C-terminus: Demethylmenaquinone methyltransferase (237 aa).

S-adenosyl-L-methionine is bound by residues Thr58, Asp79, and 106-107 (NA).

The protein belongs to the class I-like SAM-binding methyltransferase superfamily. MenG/UbiE family.

The enzyme catalyses a 2-demethylmenaquinol + S-adenosyl-L-methionine = a menaquinol + S-adenosyl-L-homocysteine + H(+). The protein operates within quinol/quinone metabolism; menaquinone biosynthesis; menaquinol from 1,4-dihydroxy-2-naphthoate: step 2/2. In terms of biological role, methyltransferase required for the conversion of demethylmenaquinol (DMKH2) to menaquinol (MKH2). The chain is Demethylmenaquinone methyltransferase from Bacillus anthracis (strain A0248).